The primary structure comprises 26 residues: uncharacterized protein (26 aa).

This is an uncharacterized protein from Saccharomyces cerevisiae (strain ATCC 204508 / S288c) (Baker's yeast).